A 500-amino-acid chain; its full sequence is Endothelial lipase (500 aa).

A signal peptide spans 1–20 (MRNTVFLLGFWSVYCYFPAG). A disulfide bridge links Cys64 with Cys77. N-linked (GlcNAc...) asparagine glycosylation is found at Asn65, Asn80, and Asn136. Ser169 (nucleophile) is an active-site residue. Asp193 (charge relay system) is an active-site residue. A disulfide bridge connects residues Cys252 and Cys272. His274 (charge relay system) is an active-site residue. 2 cysteine pairs are disulfide-bonded: Cys297/Cys316 and Cys308/Cys311. Residue 325–337 (KMRKKRNSKMYLK) participates in heparin binding. The PLAT domain occupies 347–482 (YHYQLKVHMF…SPGQELWFHK (136 aa)). Asn359 and Asn393 each carry an N-linked (GlcNAc...) asparagine glycan. The cysteines at positions 463 and 483 are disulfide-linked. Asn491 is a glycosylation site (N-linked (GlcNAc...) asparagine).

Belongs to the AB hydrolase superfamily. Lipase family. As to quaternary structure, head to tail homodimer. As to expression, expressed in placenta, lung, liver, testis and spleen.

The protein resides in the secreted. It carries out the reaction a triacylglycerol + H2O = a diacylglycerol + a fatty acid + H(+). The enzyme catalyses a 1,2-diacyl-sn-glycero-3-phosphocholine + H2O = a 2-acyl-sn-glycero-3-phosphocholine + a fatty acid + H(+). The catalysed reaction is 1,2,3-tri-(9Z-octadecenoyl)-glycerol + H2O = di-(9Z)-octadecenoylglycerol + (9Z)-octadecenoate + H(+). It catalyses the reaction 1,2,3-tributanoylglycerol + H2O = dibutanoylglycerol + butanoate + H(+). It carries out the reaction 1,2-dihexadecanoyl-sn-glycero-3-phosphocholine + H2O = hexadecanoyl-sn-glycero-3-phosphocholine + hexadecanoate + H(+). Its function is as follows. Exerts both phospholipase and triglyceride lipase activities. More active as a phospholipase than a triglyceride lipase. Hydrolyzes triglycerides, both with short-chain fatty acyl groups (tributyrin) and long-chain fatty acyl groups (triolein) with similar levels of activity toward both types of substrates. Hydrolyzes high density lipoproteins (HDL) more efficiently than other lipoproteins. This is Endothelial lipase (Lipg) from Mus musculus (Mouse).